We begin with the raw amino-acid sequence, 576 residues long: Arginine--tRNA ligase (576 aa).

The 'HIGH' region motif lies at 126–136 (ANPTGPMHIGH).

This sequence belongs to the class-I aminoacyl-tRNA synthetase family. As to quaternary structure, monomer.

The protein localises to the cytoplasm. It carries out the reaction tRNA(Arg) + L-arginine + ATP = L-arginyl-tRNA(Arg) + AMP + diphosphate. The polypeptide is Arginine--tRNA ligase (Rickettsia peacockii (strain Rustic)).